The primary structure comprises 898 residues: MWKRSEQMKIKSGKCNMAAAMETEQLGVEIFETADCEENIESQDRPKLEPFYVERYSWSQLKKLLADTRKYHGYMMAKAPHDFMFVKRNDPDGPHSDRIYYLAMSGENRENTLFYSEIPKTINRAAVLMLSWKPLLDLFQATLDYGMYSREEELLRERKRIGTVGIASYDYHQGSGTFLFQAGSGIYHVKDGGPQGFTQQPLRPNLVETSCPNIRMDPKLCPADPDWIAFIHSNDIWISNIVTREERRLTYVHNELANMEEDARSAGVATFVLQEEFDRYSGYWWCPKAETTPSGGKILRILYEENDESEVEIIHVTSPMLETRRADSFRYPKTGTANPKVTFKMSEIMIDAEGRIIDVIDKELIQPFEILFEGVEYIARAGWTPEGKYAWSILLDRSQTRLQIVLISPELFIPVEDDVMERQRLIESVPDSVTPLIIYEETTDIWINIHDIFHVFPQSHEEEIEFIFASECKTGFRHLYKITSILKESKYKRSSGGLPAPSDFKCPIKEEIAITSGEWEVLGRHGSNIQVDEVRRLVYFEGTKDSPLEHHLYVVSYVNPGEVTRLTDRGYSHSCCISQHCDFFISKYSNQKNPHCVSLYKLSSPEDDPTCKTKEFWATILDSAGPLPDYTPPEIFSFESTTGFTLYGMLYKPHDLQPGKKYPTVLFIYGGPQVQLVNNRFKGVKYFRLNTLASLGYVVVVIDNRGSCHRGLKFEGAFKYKMGQIEIDDQVEGLQYLASRYDFIDLDRVGIHGWSYGGYLSLMALMQRSDIFRVAIAGAPVTLWIFYDTGYTERYMGHPDQNEQGYYLGSVAMQAEKFPSEPNRLLLLHGFLDENVHFAHTSILLSFLVRAGKPYDLQIYPQERHSIRVPESGEHYELHLLHYLQENLGSRIAALKVI.

Active-site charge relay system residues include serine 755, aspartate 833, and histidine 865.

The protein belongs to the peptidase S9B family. DPPIV subfamily. As to quaternary structure, homodimer. Forms a ternary complex with NLRP1, composed of a DPP8 homodimer, one full-length NLRP1 protein, and one cleaved C-terminus of NLRP1 (NACHT, LRR and PYD domains-containing protein 1, C-terminus). Forms a ternary complex with CARD8, composed of a DPP8 homodimer, one full-length NLRP1 protein, and one cleaved C-terminus of CARD8 (Caspase recruitment domain-containing protein 8, C-terminus). In the ternary complex, only one subunit of the DPP8 homodimer is bound to NLRP1 or CARD8. Ubiquitously expressed, with highest levels in testis, placenta, prostate, muscle and brain.

Its subcellular location is the cytoplasm. The catalysed reaction is Release of an N-terminal dipeptide, Xaa-Yaa-|-Zaa-, from a polypeptide, preferentially when Yaa is Pro, provided Zaa is neither Pro nor hydroxyproline.. Its activity is regulated as follows. Inhibited by zinc. Inhibited by the serine proteinase inhibitor 4-(2-aminoethyl)benzenesulphonyl fluoride (AEBSF), and by di-isopropylfluorophosphate. Specifically inhibited by isoindoline derivatives. Inhibited by Val-boroPro (Talabostat, PT-100), a non-selective inhibitor, which triggers pyroptosis in monocytes and macrophages. Its function is as follows. Dipeptidyl peptidase that cleaves off N-terminal dipeptides from proteins having a Pro or Ala residue at position 2. Acts as a key inhibitor of caspase-1-dependent monocyte and macrophage pyroptosis in resting cells by preventing activation of NLRP1 and CARD8. Sequesters the cleaved C-terminal part of NLRP1 and CARD8, which respectively constitute the active part of the NLRP1 and CARD8 inflammasomes, in a ternary complex, thereby preventing their oligomerization and activation. The dipeptidyl peptidase activity is required to suppress NLRP1 and CARD8; however, neither NLRP1 nor CARD8 are bona fide substrates of DPP8, suggesting the existence of substrate(s) required for NLRP1 and CARD8 inhibition. The protein is Dipeptidyl peptidase 8 of Homo sapiens (Human).